The chain runs to 540 residues: 2,3-bisphosphoglycerate-independent phosphoglycerate mutase (540 aa).

Residues Asp-24 and Ser-74 each coordinate Mn(2+). Catalysis depends on Ser-74, which acts as the Phosphoserine intermediate. Residues His-135, 165–166, Arg-197, Arg-203, 268–271, and Lys-341 each bind substrate; these read RD and RPDR. The Mn(2+) site is built by Asp-408, His-412, Asp-449, His-450, and His-467.

It belongs to the BPG-independent phosphoglycerate mutase family. As to quaternary structure, monomer. The cofactor is Mn(2+).

It catalyses the reaction (2R)-2-phosphoglycerate = (2R)-3-phosphoglycerate. It functions in the pathway carbohydrate degradation; glycolysis; pyruvate from D-glyceraldehyde 3-phosphate: step 3/5. In terms of biological role, catalyzes the interconversion of 2-phosphoglycerate and 3-phosphoglycerate. The protein is 2,3-bisphosphoglycerate-independent phosphoglycerate mutase of Prochlorococcus marinus (strain SARG / CCMP1375 / SS120).